The sequence spans 143 residues: MASVELSADVPISPQDTWDHVSELSELGEWLVIHEGWRSELPDQLGEGVQIVGVARAMGMRNRVTWRVTKWDPPHEVAMTGSGKGGTKYGVTLTVRPTKGGSALGLRLELGGRALFGPLGSAAARAVKGDVEKSLKQFAELYG.

This is an uncharacterized protein from Mycobacterium tuberculosis (strain CDC 1551 / Oshkosh).